The sequence spans 225 residues: Ribosomal RNA small subunit methyltransferase G (225 aa).

Residues Gly-96, Phe-101, 146-147 (AE), and Arg-160 each bind S-adenosyl-L-methionine.

Belongs to the methyltransferase superfamily. RNA methyltransferase RsmG family.

It localises to the cytoplasm. Functionally, specifically methylates the N7 position of a guanine in 16S rRNA. This Mycoplasma mobile (strain ATCC 43663 / 163K / NCTC 11711) (Mesomycoplasma mobile) protein is Ribosomal RNA small subunit methyltransferase G.